A 201-amino-acid chain; its full sequence is Large ribosomal subunit protein bL25 (201 aa).

It belongs to the bacterial ribosomal protein bL25 family. CTC subfamily. Part of the 50S ribosomal subunit; part of the 5S rRNA/L5/L18/L25 subcomplex. Contacts the 5S rRNA. Binds to the 5S rRNA independently of L5 and L18.

Functionally, this is one of the proteins that binds to the 5S RNA in the ribosome where it forms part of the central protuberance. The chain is Large ribosomal subunit protein bL25 from Chlorobaculum parvum (strain DSM 263 / NCIMB 8327) (Chlorobium vibrioforme subsp. thiosulfatophilum).